Here is a 253-residue protein sequence, read N- to C-terminus: Indole-3-glycerol phosphate synthase (253 aa).

This sequence belongs to the TrpC family.

The enzyme catalyses 1-(2-carboxyphenylamino)-1-deoxy-D-ribulose 5-phosphate + H(+) = (1S,2R)-1-C-(indol-3-yl)glycerol 3-phosphate + CO2 + H2O. It participates in amino-acid biosynthesis; L-tryptophan biosynthesis; L-tryptophan from chorismate: step 4/5. The protein is Indole-3-glycerol phosphate synthase of Bacillus thuringiensis subsp. konkukian (strain 97-27).